Here is a 272-residue protein sequence, read N- to C-terminus: Lectin-like protein At1g53070 (272 aa).

An N-terminal signal peptide occupies residues Met-1 to Ala-23. Residues Tyr-24 to Gln-271 form a legume-lectin like region. Residues Asn-33, Asn-84, and Asn-134 are each glycosylated (N-linked (GlcNAc...) asparagine). Ser-241 bears the Phosphoserine mark.

This sequence belongs to the leguminous lectin family.

The protein resides in the secreted. The protein localises to the extracellular space. It is found in the apoplast. This is Lectin-like protein At1g53070 from Arabidopsis thaliana (Mouse-ear cress).